The following is a 104-amino-acid chain: Large ribosomal subunit protein uL24 (104 aa).

This sequence belongs to the universal ribosomal protein uL24 family. In terms of assembly, part of the 50S ribosomal subunit.

In terms of biological role, one of two assembly initiator proteins, it binds directly to the 5'-end of the 23S rRNA, where it nucleates assembly of the 50S subunit. Its function is as follows. One of the proteins that surrounds the polypeptide exit tunnel on the outside of the subunit. In Afipia carboxidovorans (strain ATCC 49405 / DSM 1227 / KCTC 32145 / OM5) (Oligotropha carboxidovorans), this protein is Large ribosomal subunit protein uL24.